The following is a 433-amino-acid chain: MRQLASILLLAFVVGSVSAFYSPSDGVVELTPSNFDREVLKDDAIWVVEFYAPWCGHCQSLVPEYKKLAKALKGVVKVGSVNADADSTLSGQFGVRGFPTIKIFGANKKSPTDYNGQRTAKAIAEAALAEVKKKVQGVLGGGGGSSSGGSGSSSGDDVIELTEDNFDKLVLNSDDIWLVEFFAPWCGHCKNLAPEWAKAAKELKGKVKLGALDATAHQSKAAEYNVRGYPTIKFFPAGSKRASDAQEYDGGRTASDIVSWASDKHVANVPAPELIEIINESTFETACEGKPLCVVSVLPHILDCDAKCRNKFLDTLRTLGEKFKQKQWGWAWAEGGQQLALEESLEVGGFGYPAMAVVNFKKMKFSVLKGSFSKDGINEFLRDISYGRGHTAPVRGAKKPAIVSVDPWDGKDGQLPTEEDIDLSDIDLDKDEL.

The N-terminal stretch at M1–A19 is a signal peptide. 2 Thioredoxin domains span residues F20–T119 and A120–A267. Active-site nucleophile residues include C55, C58, C186, and C189. 2 cysteine pairs are disulfide-bonded: C55/C58 and C186/C189. The N-linked (GlcNAc...) asparagine glycan is linked to N279. A disordered region spans residues V405–L433. Residues T417–L433 show a composition bias toward acidic residues. Residues K430–L433 carry the Prevents secretion from ER motif.

Belongs to the protein disulfide isomerase family. In terms of assembly, interacts with Drpr (via extracellular region). In the blastoderm embryo, expression starts at the anterior and posterior poles and later appears as broad stripes. Following gastrulation, expressed in midline precursor cells and the posterior head with low levels present throughout the embryo. During germ band extension, weak dorsoventral stripes of expression are evident. Midline expression begins and is retained throughout embryogenesis in clusters of cells in each segment in the central nervous system. At least some of the midline expression occurs in VUM neurons.

The protein resides in the endoplasmic reticulum lumen. It localises to the cell surface. It catalyses the reaction Catalyzes the rearrangement of -S-S- bonds in proteins.. Its function is as follows. Binds to both apoptotic cells and phagocytes and promotes Drpr-dependent phagocytosis of apoptotic cells. The chain is Protein disulfide-isomerase A6 homolog from Drosophila melanogaster (Fruit fly).